We begin with the raw amino-acid sequence, 391 residues long: S-adenosylmethionine synthase (391 aa).

Residue histidine 14 participates in ATP binding. Aspartate 16 is a binding site for Mg(2+). Glutamate 42 provides a ligand contact to K(+). Residues glutamate 55 and glutamine 98 each contribute to the L-methionine site. The flexible loop stretch occupies residues 98-108; sequence QSVDIAMGVDE. ATP contacts are provided by residues 172 to 174, 238 to 239, aspartate 247, 253 to 254, alanine 270, and lysine 274; these read DGK, RF, and RK. L-methionine is bound at residue aspartate 247. Lysine 278 contacts L-methionine.

This sequence belongs to the AdoMet synthase family. Homotetramer; dimer of dimers. Mg(2+) is required as a cofactor. Requires K(+) as cofactor.

Its subcellular location is the cytoplasm. It catalyses the reaction L-methionine + ATP + H2O = S-adenosyl-L-methionine + phosphate + diphosphate. It participates in amino-acid biosynthesis; S-adenosyl-L-methionine biosynthesis; S-adenosyl-L-methionine from L-methionine: step 1/1. Its function is as follows. Catalyzes the formation of S-adenosylmethionine (AdoMet) from methionine and ATP. The overall synthetic reaction is composed of two sequential steps, AdoMet formation and the subsequent tripolyphosphate hydrolysis which occurs prior to release of AdoMet from the enzyme. This is S-adenosylmethionine synthase from Clostridium botulinum (strain Langeland / NCTC 10281 / Type F).